Reading from the N-terminus, the 246-residue chain is MSSDKTSQQTFKLAPNNSVAQSNSIDQNKNKNNILSTIETMDKSISEDLYPKLQNIVSTVNLSTKLDLKQIALRARNAEYNPKRFAAVIMRLRDPKTTALIFASGKMVCTGAKTEEDSNRAARKYAKIIQKIGFPVQFKDFKIQNIVGSTDVKFPINLDHLEQDHKKFVQYEPEIFPGKIYREFNTKIVLLIFVSGKIVLTGAKTRENINKAFQKIYWVLYNYQKKDYRGANLHNQNLNIKPSIKN.

The disordered stretch occupies residues Met-1–Gln-27. 2 consecutive repeat copies span residues Leu-53–Ile-129 and Ile-143–Leu-220.

Belongs to the TBP family. Belongs to the TFIID complex together with the TBP-associated factors (TAFs). Binds DNA as monomer.

The protein resides in the nucleus. In terms of biological role, general transcription factor that functions at the core of the DNA-binding multiprotein factor TFIID. Binding of TFIID to the TATA box is the initial transcriptional step of the pre-initiation complex (PIC), playing a role in the activation of eukaryotic genes transcribed by RNA polymerase II. The sequence is that of TATA-box-binding protein from Tetrahymena thermophila.